The chain runs to 50 residues: Temporin-SHb (50 aa).

The first 10 residues, Phe-1–Cys-10, serve as a signal peptide directing secretion. A propeptide spanning residues Glu-11–Arg-35 is cleaved from the precursor. The interval Gln-12–Glu-31 is disordered. Acidic residues predominate over residues Arg-14–Val-30. At Leu-48 the chain carries Leucine amide.

It belongs to the frog skin active peptide (FSAP) family. Temporin subfamily. As to expression, expressed by the skin glands.

Its subcellular location is the secreted. Its function is as follows. Amphipathic alpha-helical peptide with no antimicrobial activity. Does not display anti-leishmania activity. Does not show hemolytic activity (LC(50)&gt;116 uM). This Pelophylax saharicus (Sahara frog) protein is Temporin-SHb.